Consider the following 594-residue polypeptide: Gamma-terpinene synthase, chloroplastic (594 aa).

Residues 1–44 (MATLSMQVSILSKEVKNVNNIGMRASKPMVARRVSTTRLRPICS) constitute a chloroplast transit peptide. Mn(2+) contacts are provided by aspartate 347 and aspartate 351. The DDXXD motif motif lies at 347 to 351 (DDVYD). Homodimerization regions lie at residues 353–359 (YGTLDEL) and 425–462 (EAKW…FTLP). Mn(2+) contacts are provided by aspartate 491 and glutamate 499.

The protein belongs to the terpene synthase family. In terms of assembly, homodimer. It depends on Mn(2+) as a cofactor. Mg(2+) is required as a cofactor. As to expression, expressed in peltate glandular trichomes.

Its subcellular location is the plastid. It is found in the chloroplast. It catalyses the reaction (2E)-geranyl diphosphate = gamma-terpinene + diphosphate. It carries out the reaction (2E)-geranyl diphosphate = alpha-terpinene + diphosphate. It participates in secondary metabolite biosynthesis; terpenoid biosynthesis. Involved in the biosynthesis of phenolic monoterpenes natural products thymol and carvacrol which have a broad range of biological activities acting as antimicrobial compounds, insecticides, antioxidants and pharmaceutical agents. Monoterpene synthase which catalyzes the conversion of geranyl diphosphate (GPP) to gamma-terpinene and the minor products alpha-thujene, alpha-terpinene, myrcene, sabinene, (+)-R-limonene, alpha-pinene and alpha-phellandrene. The sequence is that of Gamma-terpinene synthase, chloroplastic from Origanum vulgare (Wild marjoram).